The following is a 128-amino-acid chain: Sulfurtransferase TusD (128 aa).

C78 functions as the Cysteine persulfide intermediate in the catalytic mechanism.

Belongs to the DsrE/TusD family. As to quaternary structure, heterohexamer, formed by a dimer of trimers. The hexameric TusBCD complex contains 2 copies each of TusB, TusC and TusD. The TusBCD complex interacts with TusE.

Its subcellular location is the cytoplasm. Functionally, part of a sulfur-relay system required for 2-thiolation of 5-methylaminomethyl-2-thiouridine (mnm(5)s(2)U) at tRNA wobble positions. Accepts sulfur from TusA and transfers it in turn to TusE. The polypeptide is Sulfurtransferase TusD (Escherichia fergusonii (strain ATCC 35469 / DSM 13698 / CCUG 18766 / IAM 14443 / JCM 21226 / LMG 7866 / NBRC 102419 / NCTC 12128 / CDC 0568-73)).